A 395-amino-acid polypeptide reads, in one-letter code: Phosphopentomutase (395 aa).

Positions 16, 289, 294, 330, 331, and 342 each coordinate Mn(2+).

It belongs to the phosphopentomutase family. The cofactor is Mn(2+).

The protein resides in the cytoplasm. It catalyses the reaction 2-deoxy-alpha-D-ribose 1-phosphate = 2-deoxy-D-ribose 5-phosphate. The enzyme catalyses alpha-D-ribose 1-phosphate = D-ribose 5-phosphate. It functions in the pathway carbohydrate degradation; 2-deoxy-D-ribose 1-phosphate degradation; D-glyceraldehyde 3-phosphate and acetaldehyde from 2-deoxy-alpha-D-ribose 1-phosphate: step 1/2. Isomerase that catalyzes the conversion of deoxy-ribose 1-phosphate (dRib-1-P) and ribose 1-phosphate (Rib-1-P) to deoxy-ribose 5-phosphate (dRib-5-P) and ribose 5-phosphate (Rib-5-P), respectively. The protein is Phosphopentomutase of Geobacillus kaustophilus (strain HTA426).